Here is a 308-residue protein sequence, read N- to C-terminus: Probable lipid phosphate phosphatase 4 (308 aa).

A run of 6 helical transmembrane segments spans residues 26-46 (WLILVVLGLIDIVLNVIEPFH), 66-86 (IPMWAVPIICILVPICIFIVY), 93-113 (VYDLHHAILGIGFSCLVTGVT), 162-182 (SFPSGHTSWSFAGLTFLAWYL), 193-213 (GHVAKLCLVFLPILISILIGI), and 226-246 (VFAGAIIGIFVASFSYLHFFP). The tract at residues 274 to 308 (MTRTGSRGMLGNDVEPGNSASSPHDRHRESTDSDF) is disordered. The span at 296–308 (PHDRHRESTDSDF) shows a compositional bias: basic and acidic residues.

It belongs to the PA-phosphatase related phosphoesterase family.

It is found in the membrane. In Arabidopsis thaliana (Mouse-ear cress), this protein is Probable lipid phosphate phosphatase 4 (LPP4).